Consider the following 162-residue polypeptide: 2-C-methyl-D-erythritol 2,4-cyclodiphosphate synthase (162 aa).

Asp-10 and His-12 together coordinate a divalent metal cation. 4-CDP-2-C-methyl-D-erythritol 2-phosphate is bound by residues Asp-10 to His-12 and His-36 to Ser-37. Residue His-44 participates in a divalent metal cation binding. 4-CDP-2-C-methyl-D-erythritol 2-phosphate is bound by residues Asp-58 to Gly-60, Phe-63 to Asp-67, Ala-102 to Ala-108, Thr-134 to Glu-137, Phe-141, and Arg-144.

It belongs to the IspF family. Homotrimer. A divalent metal cation is required as a cofactor.

It carries out the reaction 4-CDP-2-C-methyl-D-erythritol 2-phosphate = 2-C-methyl-D-erythritol 2,4-cyclic diphosphate + CMP. The protein operates within isoprenoid biosynthesis; isopentenyl diphosphate biosynthesis via DXP pathway; isopentenyl diphosphate from 1-deoxy-D-xylulose 5-phosphate: step 4/6. Involved in the biosynthesis of isopentenyl diphosphate (IPP) and dimethylallyl diphosphate (DMAPP), two major building blocks of isoprenoid compounds. Catalyzes the conversion of 4-diphosphocytidyl-2-C-methyl-D-erythritol 2-phosphate (CDP-ME2P) to 2-C-methyl-D-erythritol 2,4-cyclodiphosphate (ME-CPP) with a corresponding release of cytidine 5-monophosphate (CMP). The chain is 2-C-methyl-D-erythritol 2,4-cyclodiphosphate synthase from Pseudoalteromonas atlantica (strain T6c / ATCC BAA-1087).